The following is a 196-amino-acid chain: GTP cyclohydrolase-2 (196 aa).

A GTP-binding site is contributed by 49–53 (RVHSE). Zn(2+) contacts are provided by Cys-54, Cys-65, and Cys-67. GTP is bound by residues Gln-70, 92 to 94 (EGR), and Thr-114. The active-site Proton acceptor is Asp-126. The Nucleophile role is filled by Arg-128. Positions 149 and 154 each coordinate GTP.

Belongs to the GTP cyclohydrolase II family. In terms of assembly, homodimer. Zn(2+) serves as cofactor.

It catalyses the reaction GTP + 4 H2O = 2,5-diamino-6-hydroxy-4-(5-phosphoribosylamino)-pyrimidine + formate + 2 phosphate + 3 H(+). It functions in the pathway cofactor biosynthesis; riboflavin biosynthesis; 5-amino-6-(D-ribitylamino)uracil from GTP: step 1/4. Catalyzes the conversion of GTP to 2,5-diamino-6-ribosylamino-4(3H)-pyrimidinone 5'-phosphate (DARP), formate and pyrophosphate. This Shigella boydii serotype 18 (strain CDC 3083-94 / BS512) protein is GTP cyclohydrolase-2.